The sequence spans 391 residues: Elongation factor Tu 1 (391 aa).

Positions Lys-10–Glu-201 constitute a tr-type G domain. A G1 region spans residues Gly-19–Thr-26. A GTP-binding site is contributed by Gly-19–Thr-26. Residue Thr-26 participates in Mg(2+) binding. Positions Gly-55–Ser-59 are G2. Residues Asp-76–Gly-79 form a G3 region. GTP is bound by residues Asp-76–His-80 and Asn-131–Asp-134. The tract at residues Asn-131–Asp-134 is G4. Residues Ser-169–Leu-171 form a G5 region.

The protein belongs to the TRAFAC class translation factor GTPase superfamily. Classic translation factor GTPase family. EF-Tu/EF-1A subfamily. Monomer.

The protein resides in the cytoplasm. The enzyme catalyses GTP + H2O = GDP + phosphate + H(+). GTP hydrolase that promotes the GTP-dependent binding of aminoacyl-tRNA to the A-site of ribosomes during protein biosynthesis. The sequence is that of Elongation factor Tu 1 from Bartonella quintana (strain Toulouse) (Rochalimaea quintana).